We begin with the raw amino-acid sequence, 384 residues long: 2-isopropylmalate synthase 2 (384 aa).

The Pyruvate carboxyltransferase domain maps to 9–260 (VYIVDTTLRD…DLGIDTSRFR (252 aa)). Asp-18, His-198, His-200, and Asn-234 together coordinate Mn(2+).

Belongs to the alpha-IPM synthase/homocitrate synthase family. LeuA type 1 subfamily. Homodimer. Requires Mn(2+) as cofactor.

It is found in the cytoplasm. The enzyme catalyses 3-methyl-2-oxobutanoate + acetyl-CoA + H2O = (2S)-2-isopropylmalate + CoA + H(+). Its pathway is amino-acid biosynthesis; L-leucine biosynthesis; L-leucine from 3-methyl-2-oxobutanoate: step 1/4. Catalyzes the condensation of the acetyl group of acetyl-CoA with 3-methyl-2-oxobutanoate (2-ketoisovalerate) to form 3-carboxy-3-hydroxy-4-methylpentanoate (2-isopropylmalate). In Caldanaerobacter subterraneus subsp. tengcongensis (strain DSM 15242 / JCM 11007 / NBRC 100824 / MB4) (Thermoanaerobacter tengcongensis), this protein is 2-isopropylmalate synthase 2.